The chain runs to 487 residues: Cytochrome P450 monooxygenase pyvB (487 aa).

Residues 17–37 (PAYSSVVIGALVVCLVCLVWP) traverse the membrane as a helical segment. Residue Cys-426 coordinates heme.

The protein belongs to the cytochrome P450 family. Heme is required as a cofactor.

It localises to the membrane. It functions in the pathway secondary metabolite biosynthesis. In terms of biological role, cytochrome P450 monooxygenase; part of the gene cluster that mediates the biosynthesis of pyranoviolin A, a pyranonigrin analog with a C-3 methoxy group. Initially, the PKS portion of pyvA synthesizes C-10 carbon chain from 5 molecules of malonyl-CoA, which is then condensed with the thiolation (T) domain-bound glycine activated by the adenylation (A) domain. The subsequent chain release by Dieckmann condensation (DKC) could be catalyzed by the TE domain present at the C-terminus of pyvA and/or the alpha/beta hydrolase pyvD, installing the tetramic acid moiety. The FAD-dependent monooxygenase pyvC next epoxidizes one of the olefins of the polyketide part, and the epoxide ring-opening induces the dihydro-gamma-pyrone ring formation. The cytochrome P450 monooxygeanse pyvB would be responsible for the 2 consecutive reactions, in which the dihydro-gamma-pyrone is oxidized to gamma-pyrone and C-7 is hydroxylated to yield pyranonigrin F. Finally, the O-methyltransferase pyvH methylates the C-3 hydroxy group to complete the biosynthesis. In Aspergillus violaceofuscus (strain CBS 115571), this protein is Cytochrome P450 monooxygenase pyvB.